The primary structure comprises 85 residues: Large ribosomal subunit protein bL27 (85 aa).

Belongs to the bacterial ribosomal protein bL27 family.

This is Large ribosomal subunit protein bL27 from Xylella fastidiosa (strain Temecula1 / ATCC 700964).